Reading from the N-terminus, the 106-residue chain is MRKRREGTANNSPTPEVTRVRTPRKENHEVLATVGSLLGSKRVNLQCMDGVVRMGRIPGSKNKKMWIREGDIVIATPWEIQDSKADVIWKYTRPQIEWLERKGYLK.

The disordered stretch occupies residues 1–24 (MRKRREGTANNSPTPEVTRVRTPR). Residues 18–92 (TRVRTPRKEN…SKADVIWKYT (75 aa)) form the S1-like domain.

This sequence belongs to the eIF-1A family.

Its function is as follows. Seems to be required for maximal rate of protein biosynthesis. Enhances ribosome dissociation into subunits and stabilizes the binding of the initiator Met-tRNA(I) to 40 S ribosomal subunits. The sequence is that of Translation initiation factor 1A 2 (eIF1A2) from Methanosarcina mazei (strain ATCC BAA-159 / DSM 3647 / Goe1 / Go1 / JCM 11833 / OCM 88) (Methanosarcina frisia).